The chain runs to 310 residues: Membrane protein insertase YidC 2 (310 aa).

The first 23 residues, methionine 1–glycine 23, serve as a signal peptide directing secretion. Cysteine 24 is lipidated: N-palmitoyl cysteine. Cysteine 24 is lipidated: S-diacylglycerol cysteine. 5 consecutive transmembrane segments (helical) span residues proline 33–alanine 53, leucine 58–leucine 78, phenylalanine 135–phenylalanine 155, leucine 180–proline 200, and valine 219–phenylalanine 239. A disordered region spans residues glutamate 262–glycine 310. A compositionally biased stretch (polar residues) spans threonine 281–lysine 297. Over residues lysine 298 to glycine 310 the composition is skewed to basic residues.

The protein belongs to the OXA1/ALB3/YidC family. Type 2 subfamily.

The protein localises to the cell membrane. Functionally, required for the insertion and/or proper folding and/or complex formation of integral membrane proteins into the membrane. Involved in integration of membrane proteins that insert both dependently and independently of the Sec translocase complex, as well as at least some lipoproteins. The protein is Membrane protein insertase YidC 2 of Streptococcus agalactiae serotype III (strain NEM316).